We begin with the raw amino-acid sequence, 208 residues long: Probable nicotinate-nucleotide adenylyltransferase (208 aa).

It belongs to the NadD family.

It carries out the reaction nicotinate beta-D-ribonucleotide + ATP + H(+) = deamido-NAD(+) + diphosphate. It functions in the pathway cofactor biosynthesis; NAD(+) biosynthesis; deamido-NAD(+) from nicotinate D-ribonucleotide: step 1/1. In terms of biological role, catalyzes the reversible adenylation of nicotinate mononucleotide (NaMN) to nicotinic acid adenine dinucleotide (NaAD). The polypeptide is Probable nicotinate-nucleotide adenylyltransferase (Trichormus variabilis (strain ATCC 29413 / PCC 7937) (Anabaena variabilis)).